Consider the following 168-residue polypeptide: Transcription antitermination protein NusB (168 aa).

Belongs to the NusB family.

Involved in transcription antitermination. Required for transcription of ribosomal RNA (rRNA) genes. Binds specifically to the boxA antiterminator sequence of the ribosomal RNA (rrn) operons. This is Transcription antitermination protein NusB from Deinococcus deserti (strain DSM 17065 / CIP 109153 / LMG 22923 / VCD115).